The primary structure comprises 1038 residues: Eukaryotic translation initiation factor 3 subunit A (1038 aa).

Residues leucine 92–alanine 121 are a coiled coil. A PCI domain is found at methionine 339 to phenylalanine 523. The stretch at isoleucine 611–alanine 899 forms a coiled coil. Composition is skewed to basic and acidic residues over residues alanine 621–arginine 632 and arginine 800–arginine 901. Disordered stretches follow at residues alanine 621–glutamine 641 and arginine 800–glutamine 1038. 2 stretches are compositionally biased toward low complexity: residues lysine 943–glutamate 952 and glycine 976–serine 993. Positions aspartate 1002–serine 1019 are enriched in polar residues.

It belongs to the eIF-3 subunit A family. Component of the eukaryotic translation initiation factor 3 (eIF-3) complex.

It localises to the cytoplasm. In terms of biological role, RNA-binding component of the eukaryotic translation initiation factor 3 (eIF-3) complex, which is involved in protein synthesis of a specialized repertoire of mRNAs and, together with other initiation factors, stimulates binding of mRNA and methionyl-tRNAi to the 40S ribosome. The eIF-3 complex specifically targets and initiates translation of a subset of mRNAs involved in cell proliferation. The sequence is that of Eukaryotic translation initiation factor 3 subunit A (tif32) from Aspergillus oryzae (strain ATCC 42149 / RIB 40) (Yellow koji mold).